Here is a 120-residue protein sequence, read N- to C-terminus: Large ribosomal subunit protein uL18c (120 aa).

The protein belongs to the universal ribosomal protein uL18 family. In terms of assembly, part of the 50S ribosomal subunit; contacts the 5S rRNA.

It is found in the plastid. Its subcellular location is the chloroplast. In terms of biological role, binds 5S rRNA, forms part of the central protuberance of the 50S subunit. The protein is Large ribosomal subunit protein uL18c (rpl18) of Porphyra purpurea (Red seaweed).